A 119-amino-acid polypeptide reads, in one-letter code: uncharacterized protein (119 aa).

The first 23 residues, 1–23, serve as a signal peptide directing secretion; sequence MVKWAVSILVNALLLIVIDGYID. 3 helical membrane passes run 27–47, 50–70, and 88–108; these read ISSI…NVLI, LLII…LFVI, and IDGF…HLLI.

It localises to the cell membrane. This is an uncharacterized protein from Bacillus subtilis (strain 168).